The chain runs to 330 residues: MSEGLFFIIETFIKAVVILAVIACLAGLATYAERKVLAYMQRRIGPDMVGPVGVLQIVADMIKLFTKEDIVPANANRFIFLIAPLISAIAAFAALAPIPFLPEFELFGHTIRPILADINVGVLYVMGVASVCVFSPLMAGLASYNKFALIAAARAVMGLISFEVVSGLALLSVIMITGSLSLIDINNYQKGIFGWFVFKQPLAFVLFLMASFVECNRTPFCLTENETEIVAGYGTEYSGMRWAMFFIGEYANMIASSIVITLIFLGGFNSFWFVPGGLMMIFKASCVFFFFLWTRAAWPHLRPDQLMALCWKILLPLALVNVLITGIALI.

9 helical membrane-spanning segments follow: residues 5 to 25 (LFFI…IACL), 44 to 64 (IGPD…MIKL), 78 to 98 (FIFL…LAPI), 122 to 142 (VLYV…AGLA), 156 to 176 (VMGL…VIMI), 192 to 212 (IFGW…MASF), 240 to 260 (MRWA…SIVI), 271 to 293 (FWFV…FFLW), and 310 to 330 (CWKI…IALI).

It belongs to the complex I subunit 1 family. NDH-1 is composed of 14 different subunits. Subunits NuoA, H, J, K, L, M, N constitute the membrane sector of the complex.

Its subcellular location is the cell inner membrane. The catalysed reaction is a quinone + NADH + 5 H(+)(in) = a quinol + NAD(+) + 4 H(+)(out). NDH-1 shuttles electrons from NADH, via FMN and iron-sulfur (Fe-S) centers, to quinones in the respiratory chain. The immediate electron acceptor for the enzyme in this species is believed to be ubiquinone. Couples the redox reaction to proton translocation (for every two electrons transferred, four hydrogen ions are translocated across the cytoplasmic membrane), and thus conserves the redox energy in a proton gradient. This subunit may bind ubiquinone. This is NADH-quinone oxidoreductase subunit H from Campylobacter curvus (strain 525.92).